The sequence spans 101 residues: Small ribosomal subunit protein bS18c (101 aa).

Positions 1–19 are enriched in basic residues; it reads MNKSKRPFTKSKRSFRRRL. The disordered stretch occupies residues 1–20; that stretch reads MNKSKRPFTKSKRSFRRRLP.

This sequence belongs to the bacterial ribosomal protein bS18 family. Part of the 30S ribosomal subunit.

It is found in the plastid. The protein localises to the chloroplast. The sequence is that of Small ribosomal subunit protein bS18c from Arabis hirsuta (Hairy rock-cress).